The primary structure comprises 616 residues: Electron transfer flavoprotein-ubiquinone oxidoreductase, mitochondrial (616 aa).

Residues Met1–Cys32 constitute a mitochondrion transit peptide. Val70–Ile84 contributes to the FAD binding site. Residue Lys95 is modified to N6-acetyllysine. Residues Ile108 to Asp129 lie within the membrane without spanning it. N6-acetyllysine is present on residues Lys131 and Lys222. A ubiquinone is bound by residues Gly304 and Gly305. N6-acetyllysine occurs at positions 356 and 415. An intramembrane segment occupies Ala427 to Glu446. Ser550 carries the post-translational modification Phosphoserine. [4Fe-4S] cluster is bound by residues Cys560, Cys585, Cys588, and Cys591. In terms of domain architecture, 4Fe-4S ferredoxin-type spans Phe576–Pro605.

The protein belongs to the ETF-QO/FixC family. As to quaternary structure, monomer. [4Fe-4S] cluster is required as a cofactor. The cofactor is FAD.

It localises to the mitochondrion inner membrane. The enzyme catalyses a ubiquinone + reduced [electron-transfer flavoprotein] = a ubiquinol + oxidized [electron-transfer flavoprotein] + H(+). In terms of biological role, accepts electrons from ETF and reduces ubiquinone. This Rattus norvegicus (Rat) protein is Electron transfer flavoprotein-ubiquinone oxidoreductase, mitochondrial (Etfdh).